A 334-amino-acid chain; its full sequence is Beta-hexosaminidase (334 aa).

Residues Asp-60, Arg-68, Arg-133, and 163-164 each bind substrate; that span reads KH. The active-site Proton donor/acceptor is His-176. The Nucleophile role is filled by Asp-247.

This sequence belongs to the glycosyl hydrolase 3 family. NagZ subfamily.

The protein resides in the cytoplasm. It catalyses the reaction Hydrolysis of terminal non-reducing N-acetyl-D-hexosamine residues in N-acetyl-beta-D-hexosaminides.. Its pathway is cell wall biogenesis; peptidoglycan recycling. In terms of biological role, plays a role in peptidoglycan recycling by cleaving the terminal beta-1,4-linked N-acetylglucosamine (GlcNAc) from peptide-linked peptidoglycan fragments, giving rise to free GlcNAc, anhydro-N-acetylmuramic acid and anhydro-N-acetylmuramic acid-linked peptides. The protein is Beta-hexosaminidase of Xanthomonas euvesicatoria pv. vesicatoria (strain 85-10) (Xanthomonas campestris pv. vesicatoria).